The chain runs to 243 residues: Tryptophan synthase alpha chain (243 aa).

Catalysis depends on proton acceptor residues Glu32 and Asp43.

This sequence belongs to the TrpA family. In terms of assembly, tetramer of two alpha and two beta chains.

It localises to the plastid. Its subcellular location is the chloroplast. The enzyme catalyses (1S,2R)-1-C-(indol-3-yl)glycerol 3-phosphate + L-serine = D-glyceraldehyde 3-phosphate + L-tryptophan + H2O. Its pathway is amino-acid biosynthesis; L-tryptophan biosynthesis; L-tryptophan from chorismate: step 5/5. Its function is as follows. The alpha subunit is responsible for the aldol cleavage of indoleglycerol phosphate to indole and glyceraldehyde 3-phosphate. In Cyanidioschyzon merolae (strain NIES-3377 / 10D) (Unicellular red alga), this protein is Tryptophan synthase alpha chain.